The following is a 689-amino-acid chain: Glycine--tRNA ligase beta subunit (689 aa).

It belongs to the class-II aminoacyl-tRNA synthetase family. As to quaternary structure, tetramer of two alpha and two beta subunits.

Its subcellular location is the cytoplasm. It carries out the reaction tRNA(Gly) + glycine + ATP = glycyl-tRNA(Gly) + AMP + diphosphate. This chain is Glycine--tRNA ligase beta subunit, found in Actinobacillus pleuropneumoniae serotype 3 (strain JL03).